Consider the following 1819-residue polypeptide: U3 small nucleolar RNA-associated protein 10 (1819 aa).

An HEAT repeat occupies L1779–Y1817.

The protein belongs to the HEATR1/UTP10 family. In terms of assembly, component of the ribosomal small subunit (SSU) processome.

The protein localises to the nucleus. The protein resides in the nucleolus. Its function is as follows. Involved in nucleolar processing of pre-18S ribosomal RNA. Involved in ribosome biosynthesis. This Meyerozyma guilliermondii (strain ATCC 6260 / CBS 566 / DSM 6381 / JCM 1539 / NBRC 10279 / NRRL Y-324) (Yeast) protein is U3 small nucleolar RNA-associated protein 10.